The following is an 81-amino-acid chain: Large ribosomal subunit protein bL28 (81 aa).

Belongs to the bacterial ribosomal protein bL28 family.

The chain is Large ribosomal subunit protein bL28 from Gloeobacter violaceus (strain ATCC 29082 / PCC 7421).